Consider the following 629-residue polypeptide: MFYPDPFDVIIIGGGHAGTEAAMAAARMGQQTLLLTHNIDTLGQMSCNPAIGGIGKGHLVKEVDALGGLMAKAIDQAGIQFRILNASKGPAVRATRAQADRVLYRQAVRTALENQPNLMIFQQAVEDLIVENDRVVGAVTQMGLKFRAKAVVLTVGTFLDGKIHIGLDNYSSGRAGDPPSIPLSRRLRELPLRVSRLKTGTPPRIDARTIDFSVLAQQHGDNPMPVFSFMGNASQHPQQVPCYITHTNEKTHDVIRNNLDRSPMYAGVIEGIGPRYCPSIEDKVMRFADRNQHQIFLEPEGLTSNEIYPNGISTSLPFDVQMQIVRSMQGMENAKIVRPGYAIEYDFFDPRDLKPTLESKFIQGLFFAGQINGTTGYEEAAAQGLLAGLNAARLSADKEGWAPARSQAYLGVLVDDLCTLGTKEPYRMFTSRAEYRLMLREDNADLRLTEMGRELGLVDDERWARFNEKLENIERERQRLKSTWVTPSAESAGEVNAHLTAPLSREASGEDLLRRPEMTYAQLTSLTPFAPGLDDAQAAEQVEIQVKYEGYIARQQDEIEKQLRNENTLLPATLDYRQVSGLSNEVIAKLNDHKPVSIGQASRISGVTPAAISILLVWLKKQGMLRRSA.

FAD is bound by residues 13 to 18 (GGGHAG), V125, and S180. Residue 273–287 (GPRYCPSIEDKVMRF) coordinates NAD(+). An FAD-binding site is contributed by Q370.

This sequence belongs to the MnmG family. In terms of assembly, homodimer. Heterotetramer of two MnmE and two MnmG subunits. Requires FAD as cofactor.

The protein resides in the cytoplasm. In terms of biological role, NAD-binding protein involved in the addition of a carboxymethylaminomethyl (cmnm) group at the wobble position (U34) of certain tRNAs, forming tRNA-cmnm(5)s(2)U34. This chain is tRNA uridine 5-carboxymethylaminomethyl modification enzyme MnmG, found in Citrobacter koseri (strain ATCC BAA-895 / CDC 4225-83 / SGSC4696).